We begin with the raw amino-acid sequence, 377 residues long: MACNQALIHLANLRHNLGEIMSRTRARVCLPVKADAYGHGACDVAQAALSCGVHSFAVACVQEASQLRAAGVRAPILCLSTPTAEEISSLIEHRVHTVISERAHIALIARALRQSADTGATCGVHVKIDTGMGRIGCAPDEACALVQMVCATPGLHLEGVCTHFSVADSVRAEDLQYTEMQRAHFMHCVQYIRKSGISIPLVHAANSAALLCHPRAHFDMVRPGLLAYGYAPESVHPAVRSVFLPVMELVTQVRAIKKIPAGAYVSYQRLWRAHTETHVGILPIGYADGVMRALSPGLQVCIGGKWYPVVGAICMDQCVVDLGTPLRVTVGDRVTLFGPQDAGGPGQGADVLASHAGTIPYELLCAIGKRVERVYIR.

The active-site Proton acceptor; specific for D-alanine is Lys-33. At Lys-33 the chain carries N6-(pyridoxal phosphate)lysine. Arg-134 is a binding site for substrate. The Proton acceptor; specific for L-alanine role is filled by Tyr-267. A substrate-binding site is contributed by Met-315.

Belongs to the alanine racemase family. Pyridoxal 5'-phosphate is required as a cofactor.

The catalysed reaction is L-alanine = D-alanine. It functions in the pathway amino-acid biosynthesis; D-alanine biosynthesis; D-alanine from L-alanine: step 1/1. Its function is as follows. Catalyzes the interconversion of L-alanine and D-alanine. May also act on other amino acids. The protein is Alanine racemase (alr) of Treponema pallidum subsp. pallidum (strain SS14).